Consider the following 57-residue polypeptide: uncharacterized protein (57 aa).

Residues 12–34 (VIAVLSLFVFAVAVFFVGMALLT) traverse the membrane as a helical segment.

The protein localises to the membrane. This is an uncharacterized protein from Pasteurella multocida (strain Pm70).